A 147-amino-acid polypeptide reads, in one-letter code: uncharacterized protein (147 aa).

The CMP/dCMP-type deaminase domain maps to 4 to 120 (KWAKRFFQMA…EQTEDFLSRW (117 aa)). Position 67 (His67) interacts with Zn(2+). Glu69 acts as the Proton donor in catalysis. Residues Cys92 and Cys95 each coordinate Zn(2+).

It belongs to the cytidine and deoxycytidylate deaminase family. The cofactor is Zn(2+).

This is an uncharacterized protein from Aliivibrio fischeri (Vibrio fischeri).